We begin with the raw amino-acid sequence, 371 residues long: Putative RNA-binding protein Luc7-like 1 (371 aa).

Coiled-coil stretches lie at residues 87-177 (MDHL…RNSM) and 220-256 (QIRE…EERL). Over residues 232–257 (VAEKQEKRNQDRLRRREEREREERLG) the composition is skewed to basic and acidic residues. Residues 232-371 (VAEKQEKRNQ…RSEEKEAGEI (140 aa)) are disordered. The span at 258-317 (RRSGSRTRDRRRSRSRDRRRRRSRSTSRERRKFSRSRSRDRYRRHRSRSRSHSRGHRRAS) shows a compositional bias: basic residues. Basic and acidic residues-rich tracts occupy residues 318–351 (RDRS…DWRL) and 361–371 (RRSEEKEAGEI). 2 positions are modified to phosphoserine: serine 336 and serine 363.

Belongs to the Luc7 family.

In terms of biological role, may bind to RNA via its Arg/Ser-rich domain. The sequence is that of Putative RNA-binding protein Luc7-like 1 (Luc7l) from Mus musculus (Mouse).